Here is a 122-residue protein sequence, read N- to C-terminus: MKHASFCLSSRILLLAPCRYLGTLLLLLPYPCSTLRQFLFLLRSLFIRDVEWIPAGLSHHIPYFPLASPPLTVETLLIARLLLSIKQLSLPPAKTASLSASLDAKTKGRSLLSSCSYCYMPT.

Its subcellular location is the mitochondrion. This is an uncharacterized protein from Arabidopsis thaliana (Mouse-ear cress).